A 1088-amino-acid polypeptide reads, in one-letter code: uncharacterized protein (1088 aa).

A Phosphoserine modification is found at S299. Residues 954–980 (PRSSVATTASTESSEQGPKMKRMARRK) form a disordered region. Over residues 956 to 968 (SSVATTASTESSE) the composition is skewed to low complexity. S984 is subject to Phosphoserine. T1013 carries the post-translational modification Phosphothreonine. Positions 1063 to 1088 (MKVTDKAKDEDIDPMDPMSPLNKDVS) are disordered. S1081 carries the post-translational modification Phosphoserine.

This is an uncharacterized protein from Saccharomyces cerevisiae (strain ATCC 204508 / S288c) (Baker's yeast).